A 112-amino-acid polypeptide reads, in one-letter code: MAAPGDGADLEASLLSFEKLDRASPDLWPEQLPGVAEFAASFKSPITSSPPKWMAELENDDIDMLKELGSLTTANLMEKVRGLQNLAYQLGLDESREMTRGKFLNILEKPKK.

This sequence belongs to the lin-52 family. In terms of assembly, component of the DREAM complex.

This is Protein lin-52 homolog (LIN52) from Gallus gallus (Chicken).